Here is a 395-residue protein sequence, read N- to C-terminus: GA-binding protein subunit beta-1 (395 aa).

S2 carries the post-translational modification N-acetylserine. ANK repeat units lie at residues 5–34 (DLGK…PFTT) and 37–66 (LGTS…SRDA). K69 carries the post-translational modification N6-acetyllysine. ANK repeat units lie at residues 70-99 (VDRT…DVNA), 103-132 (LKMT…DVHT), and 136-166 (FCKT…QINT). A transcription activation and HCFC1 interaction region spans residues 258 to 327 (DGAIQQVVSS…ETVISEEPPA (70 aa)). K352 and K381 each carry N6-acetyllysine.

Heterotetramer of two alpha and two beta subunits. Interacts with HCFC1, causing repression of transcriptional activity. In terms of processing, acetylated by EP300/p300. Deacetylated by SIRT7, promoting heterotetramerization and activity.

The protein localises to the nucleus. In terms of biological role, transcription factor capable of interacting with purine rich repeats (GA repeats). Acts as a master regulator of nuclear-encoded mitochondrial genes. (Microbial infection) Necessary for the expression of the Adenovirus E4 gene. This chain is GA-binding protein subunit beta-1 (GABPB1), found in Homo sapiens (Human).